The sequence spans 4243 residues: Fibrocystin-L (4243 aa).

An N-terminal signal peptide occupies residues 1–20 (MGHLWLLGIWGLCGLLLCAA). At 21-4210 (DPSTDGSQII…KASTVGTYAQ (4190 aa)) the chain is on the extracellular side. IPT/TIG domains lie at 31–129 (PKVT…TCKG), 146–255 (PTIR…KMAY), and 270–361 (AEVT…ILEY). Residue Thr-122 is glycosylated (O-linked (GalNAc...) threonine). One can recognise a PA14 domain in the interval 337 to 492 (PGGRGLKLEV…NVYTEQQTGD (156 aa)). Thr-445 carries O-linked (GalNAc...) threonine glycosylation. 11 IPT/TIG domains span residues 1067–1151 (PLVL…EFYF), 1155–1234 (SQIS…AFSY), 1240–1322 (PIIT…RDKL), 1330–1469 (LEVT…SFSY), 1566–1649 (PSIS…TLSN), 1659–1743 (PNID…TFSY), 1749–1828 (PYIT…NLTV), 1831–1910 (PPVA…LFTY), 1916–1997 (PFLR…VFEY), 1999–2085 (LNIQ…PFTY), and 2091–2176 (PLIT…DFLY). O-linked (GalNAc...) threonine glycosylation is found at Thr-1803 and Thr-1839. Residues 2184 to 2304 (FSWGGKSPPE…VPVTWTRLAH (121 aa)) enclose the G8 1 domain. The O-linked (GalNAc...) threonine glycan is linked to Thr-2320. PbH1 repeat units follow at residues 2508–2530 (THHL…FIED), 2566–2588 (NPNN…WYRM), 2665–2687 (GGAL…ETKR), and 2733–2756 (SEGL…ALGV). The 139-residue stretch at 3036–3174 (SFWQSSRENN…HSIYKTKLSE (139 aa)) folds into the G8 2 domain. PbH1 repeat units lie at residues 3293-3315 (KGNA…RDST), 3355-3377 (TDGL…RIWG), 3416-3438 (GTNT…RIDG), 3471-3493 (PGCS…YFQT), and 3527-3548 (SKNV…NCSD). O-linked (GalNAc...) threonine glycosylation is present at Thr-3736. Residues 4211–4231 (IMTVVISCLVGRMWLLEIFMA) traverse the membrane as a helical segment. Residues 4232 to 4243 (AVSTLNITLRSY) are Cytoplasmic-facing.

Its subcellular location is the membrane. The protein localises to the cell projection. It is found in the stereocilium membrane. Component of hair-cell stereocilia coat. Required for normal hearing. The protein is Fibrocystin-L (PKHD1L1) of Homo sapiens (Human).